Consider the following 1208-residue polypeptide: DNA-directed RNA polymerase subunit beta (1208 aa).

The disordered stretch occupies residues 1182–1208 (EKKAAEQVEDEKDDVIQNFETAEDNLD).

Belongs to the RNA polymerase beta chain family. The RNAP catalytic core consists of 2 alpha, 1 beta, 1 beta' and 1 omega subunit. When a sigma factor is associated with the core the holoenzyme is formed, which can initiate transcription.

The catalysed reaction is RNA(n) + a ribonucleoside 5'-triphosphate = RNA(n+1) + diphosphate. Its function is as follows. DNA-dependent RNA polymerase catalyzes the transcription of DNA into RNA using the four ribonucleoside triphosphates as substrates. In Enterococcus faecium (Streptococcus faecium), this protein is DNA-directed RNA polymerase subunit beta.